Here is a 782-residue protein sequence, read N- to C-terminus: E3 ubiquitin-protein ligase SopA (782 aa).

Residues 137 to 171 (VSVSANNRPTVSEGRTPPVSPSLSLQATSSPSSPA) form a disordered region. The segment covering 157-171 (PSLSLQATSSPSSPA) has biased composition (low complexity). Cysteine 753 (glycyl thioester intermediate) is an active-site residue.

It belongs to the SopA E3 ligase family. In terms of processing, ubiquitinated in the presence of host E1 ubiquitin-activating enzyme, E2 ubiquitin-conjugating enzyme and ubiquitin.

Its subcellular location is the secreted. The protein resides in the host cell. It catalyses the reaction S-ubiquitinyl-[E2 ubiquitin-conjugating enzyme]-L-cysteine + [acceptor protein]-L-lysine = [E2 ubiquitin-conjugating enzyme]-L-cysteine + N(6)-ubiquitinyl-[acceptor protein]-L-lysine.. In terms of biological role, effector proteins function to alter host cell physiology and promote bacterial survival in host tissues. This protein is an E3 ubiquitin ligase that interferes with host's ubiquitination pathway. This chain is E3 ubiquitin-protein ligase SopA (sopA), found in Salmonella dublin (strain CT_02021853).